The primary structure comprises 125 residues: Cu-Zn superoxide dismutase-like protein (125 aa).

An intrachain disulfide couples cysteine 52 to cysteine 102.

Belongs to the Cu-Zn superoxide dismutase family.

The protein resides in the host cytoplasm. Its function is as follows. Virion protein with no enzymatic activity. This chain is Cu-Zn superoxide dismutase-like protein, found in Camelpox virus (strain M-96).